A 146-amino-acid polypeptide reads, in one-letter code: 3-dehydroquinate dehydratase (146 aa).

The Proton acceptor role is filled by Tyr24. Substrate-binding residues include Asn73, His79, and Asp86. Catalysis depends on His99, which acts as the Proton donor. Substrate contacts are provided by residues 100–101 (LS) and Arg110.

It belongs to the type-II 3-dehydroquinase family. In terms of assembly, homododecamer.

It carries out the reaction 3-dehydroquinate = 3-dehydroshikimate + H2O. It functions in the pathway metabolic intermediate biosynthesis; chorismate biosynthesis; chorismate from D-erythrose 4-phosphate and phosphoenolpyruvate: step 3/7. In terms of biological role, catalyzes a trans-dehydration via an enolate intermediate. The polypeptide is 3-dehydroquinate dehydratase (Shewanella oneidensis (strain ATCC 700550 / JCM 31522 / CIP 106686 / LMG 19005 / NCIMB 14063 / MR-1)).